We begin with the raw amino-acid sequence, 43 residues long: Photosystem I reaction center subunit IX (43 aa).

A helical membrane pass occupies residues 7–27 (YLSTAPVLSTIWFGSLAGLLI).

The protein belongs to the PsaJ family.

Its subcellular location is the plastid. It localises to the chloroplast thylakoid membrane. Functionally, may help in the organization of the PsaE and PsaF subunits. The polypeptide is Photosystem I reaction center subunit IX (Vitis vinifera (Grape)).